A 168-amino-acid chain; its full sequence is Peroxynitrite isomerase (168 aa).

Positions 25-31 (GTWRGAG) match the GXWXGXG motif. Histidine 160 lines the heme b pocket.

The protein belongs to the nitrobindin family. As to quaternary structure, homodimer. Heme b serves as cofactor.

The enzyme catalyses peroxynitrite = nitrate. It functions in the pathway nitrogen metabolism. Functionally, heme-binding protein able to scavenge peroxynitrite and to protect free L-tyrosine against peroxynitrite-mediated nitration, by acting as a peroxynitrite isomerase that converts peroxynitrite to nitrate. Therefore, this protein likely plays a role in peroxynitrite sensing and in the detoxification of reactive nitrogen and oxygen species (RNS and ROS, respectively). Is able to bind nitric oxide (NO) in vitro, but may act as a sensor of peroxynitrite levels in vivo. This Nocardia farcinica (strain IFM 10152) protein is Peroxynitrite isomerase.